Reading from the N-terminus, the 665-residue chain is Sodium-dependent phosphate transporter 1-B (665 aa).

6 helical membrane passes run 26-46 (YMWLLIVGFIIAFVLAFSVGA), 67-87 (ACILASIFETLGSVLLGAKVS), 107-127 (LMAGSVSAMFGSAVWQLAASF), 163-183 (IVASWFLSPLLSGVMSAVLFY), 202-222 (ALPFFYAVTMGINLFSIMFTG), and 235-255 (GVLLISIGFGIITALIVWFAV). Disordered stretches follow at residues 294–345 (VPEE…APKT) and 423–442 (ESEFRASEDGDKEKAGAQER). Positions 296 to 306 (EESSVLSSSTP) are enriched in low complexity. The span at 329–338 (ADQKDCKESD) shows a compositional bias: basic and acidic residues. 4 helical membrane passes run 499 to 519 (VSMLFQFLQILTACFGSFAHG), 548 to 568 (TPIWLLLYGGVGICVGLWVWG), 588 to 608 (FSIELASAVTVVVASNIGLPV), and 638 to 658 (IFMAWFVTVPISGLISAAIMA).

Belongs to the inorganic phosphate transporter (PiT) (TC 2.A.20) family.

The protein resides in the membrane. Sodium-phosphate symporter which plays a fundamental housekeeping role in phosphate transport. In Danio rerio (Zebrafish), this protein is Sodium-dependent phosphate transporter 1-B (slc20a1b).